The following is a 470-amino-acid chain: Amino-acid permease RocC (470 aa).

Helical transmembrane passes span 18 to 38 (FMIA…GFTI), 44 to 64 (LGAI…MLCL), 90 to 110 (GFMI…LELT), 119 to 139 (WLPS…IFLI), 159 to 179 (VAAI…LIDF), 196 to 216 (GLFP…NFSF), 243 to 263 (VIWR…AILP), 281 to 301 (IGIP…ILSV), 338 to 358 (ALLI…MAAE), 360 to 380 (VYLW…MSIC), 409 to 429 (LVPI…IFIP), and 433 to 453 (IGLY…HLSI).

Belongs to the amino acid-polyamine-organocation (APC) superfamily.

The protein resides in the cell membrane. Functionally, putative transport protein involved in arginine degradative pathway. Probably transports arginine or ornithine. The polypeptide is Amino-acid permease RocC (rocC) (Bacillus subtilis (strain 168)).